The sequence spans 410 residues: Auxin-induced protein 5NG4 (410 aa).

At M1–R16 the chain is on the cytoplasmic side. The chain crosses the membrane as a helical span at residues V17–S37. Topologically, residues R38–K47 are extracellular. A helical membrane pass occupies residues V48–F68. The Cytoplasmic portion of the chain corresponds to L69–R74. A helical membrane pass occupies residues P75 to G95. Residues Q96–P109 are Extracellular-facing. Residues T110 to L130 traverse the membrane as a helical segment. Over R131–D141 the chain is Cytoplasmic. A helical membrane pass occupies residues G142–Y162. At K163–N196 the chain is on the extracellular side. N196 carries N-linked (GlcNAc...) asparagine glycosylation. The chain crosses the membrane as a helical span at residues W197–L217. In terms of domain architecture, EamA spans L209–W338. Topologically, residues Q218–L229 are cytoplasmic. The helical transmembrane segment at S230 to F250 threads the bilayer. Residues E251–E264 are Extracellular-facing. Residues L265–W285 traverse the membrane as a helical segment. Over C286–P292 the chain is Cytoplasmic. The chain crosses the membrane as a helical span at residues V293 to I313. Topologically, residues L314–Q317 are extracellular. Residues F318–W338 form a helical membrane-spanning segment. At G339–P410 the chain is on the cytoplasmic side.

It belongs to the drug/metabolite transporter (DMT) superfamily. Plant drug/metabolite exporter (P-DME) (TC 2.A.7.4) family.

The protein resides in the membrane. This Pinus taeda (Loblolly pine) protein is Auxin-induced protein 5NG4.